The following is a 521-amino-acid chain: Anaerobic nitric oxide reductase flavorubredoxin (521 aa).

Positions 30–210 are zinc metallo-hydrolase; sequence HKGTSYNSYL…PFSPLVTAKI (181 aa). His79, Glu81, Asp83, His147, Asp166, and His227 together coordinate Fe cation. A Flavodoxin-like domain is found at 254–393; the sequence is ITLFYDSMSN…LCREHGRQLA (140 aa). Residues 260 to 264 and 342 to 369 contribute to the FMN site; these read SMSNN and AFGSYGWTGGAVDRIQTRLMDAGFDISI. The region spanning 464-515 is the Rubredoxin-like domain; that stretch reads DQPMLCTVCQWIYDPALGEPDQLVAPGTPWARVPDSFLCPGCGIGKEVFEPC. Cys469, Cys472, Cys502, and Cys505 together coordinate Fe cation.

In the N-terminal section; belongs to the zinc metallo-hydrolase group 3 family. Homotetramer. Requires Fe cation as cofactor. The cofactor is FMN.

It is found in the cytoplasm. Its pathway is nitrogen metabolism; nitric oxide reduction. In terms of biological role, anaerobic nitric oxide reductase; uses NADH to detoxify nitric oxide (NO), protecting several 4Fe-4S NO-sensitive enzymes. Has at least 2 reductase partners, only one of which (NorW, flavorubredoxin reductase) has been identified. NO probably binds to the di-iron center; electrons enter from the NorW at rubredoxin and are transferred sequentially to the FMN center and the di-iron center. Also able to function as an aerobic oxygen reductase. The polypeptide is Anaerobic nitric oxide reductase flavorubredoxin (Aeromonas salmonicida (strain A449)).